The primary structure comprises 141 residues: Cell division protein SepF (141 aa).

It belongs to the SepF family. In terms of assembly, homodimer. Interacts with FtsZ.

It is found in the cytoplasm. In terms of biological role, cell division protein that is part of the divisome complex and is recruited early to the Z-ring. Probably stimulates Z-ring formation, perhaps through the cross-linking of FtsZ protofilaments. Its function overlaps with FtsA. In Anoxybacillus flavithermus (strain DSM 21510 / WK1), this protein is Cell division protein SepF.